The chain runs to 397 residues: Phosphoglycerate kinase (397 aa).

Residues 21 to 23, Arg-36, 59 to 62, Arg-118, and Arg-151 each bind substrate; these read DFN and HCGR. ATP contacts are provided by residues Lys-201, Glu-323, and 353 to 356; that span reads GGDT.

The protein belongs to the phosphoglycerate kinase family. In terms of assembly, monomer.

The protein localises to the cytoplasm. It catalyses the reaction (2R)-3-phosphoglycerate + ATP = (2R)-3-phospho-glyceroyl phosphate + ADP. It functions in the pathway carbohydrate degradation; glycolysis; pyruvate from D-glyceraldehyde 3-phosphate: step 2/5. The protein is Phosphoglycerate kinase of Bartonella tribocorum (strain CIP 105476 / IBS 506).